A 163-amino-acid chain; its full sequence is 3-isopropylmalate dehydratase small subunit 2 (163 aa).

This sequence belongs to the LeuD family. LeuD type 2 subfamily. As to quaternary structure, heterodimer of LeuC and LeuD.

It catalyses the reaction (2R,3S)-3-isopropylmalate = (2S)-2-isopropylmalate. It functions in the pathway amino-acid biosynthesis; L-leucine biosynthesis; L-leucine from 3-methyl-2-oxobutanoate: step 2/4. Catalyzes the isomerization between 2-isopropylmalate and 3-isopropylmalate, via the formation of 2-isopropylmaleate. This is 3-isopropylmalate dehydratase small subunit 2 (leuD2) from Pyrococcus abyssi (strain GE5 / Orsay).